Here is a 374-residue protein sequence, read N- to C-terminus: Chaperone protein DnaJ (374 aa).

One can recognise a J domain in the interval 6 to 70 (DYYDILGVSK…QKRAQYDQFG (65 aa)). The CR-type zinc finger occupies 135 to 217 (GKKTTIKYSR…CGGTGHTSQQ (83 aa)). Residues cysteine 148, cysteine 151, cysteine 165, cysteine 168, cysteine 191, cysteine 194, cysteine 205, and cysteine 208 each coordinate Zn(2+). 4 CXXCXGXG motif repeats span residues 148-155 (CKTCGGSG), 165-172 (CHKCNGTG), 191-198 (CDVCNGTG), and 205-212 (CPTCGGTG). 2 disordered regions span residues 308–328 (GTNF…GTGD) and 347–374 (EALK…KFMN).

The protein belongs to the DnaJ family. Homodimer. It depends on Zn(2+) as a cofactor.

The protein localises to the cytoplasm. Functionally, participates actively in the response to hyperosmotic and heat shock by preventing the aggregation of stress-denatured proteins and by disaggregating proteins, also in an autonomous, DnaK-independent fashion. Unfolded proteins bind initially to DnaJ; upon interaction with the DnaJ-bound protein, DnaK hydrolyzes its bound ATP, resulting in the formation of a stable complex. GrpE releases ADP from DnaK; ATP binding to DnaK triggers the release of the substrate protein, thus completing the reaction cycle. Several rounds of ATP-dependent interactions between DnaJ, DnaK and GrpE are required for fully efficient folding. Also involved, together with DnaK and GrpE, in the DNA replication of plasmids through activation of initiation proteins. This chain is Chaperone protein DnaJ, found in Pediococcus pentosaceus (strain ATCC 25745 / CCUG 21536 / LMG 10740 / 183-1w).